The sequence spans 1847 residues: MLIQKNQCHITRTRENCDCTMNTVNEDLCLSASTLGSSSVTTQLVDPLDRKICLIRRQNDVKKRVIWGIEVAEKLHWKGWELGKETTRTLVLKNLSLKTQKMKYRPPKTKFFFTIIPQPIFLSPGITLTLPIVFRPLEAKEYTDQLWFEKEEGVFCVTLKATLPCYKLDCPSSLQLPMCALGDTVETWFCLNNVGDLPTFFTWEVPAPFQILPTTGLLEPGLGCKIKVTFEPLIAVIHEVEALCWYGKGNKQKNSINIQAAAKCAQLLVSIKHKGLEDQDQEGFQKVVHFGYVSVGSVAERQIRLYNPSAVNAPFKIEMAEHVLTKDPSFSCSTSQGIVPPGEKKCLSLFFHPKTLDSRAIDYFSIIPSGCATKTLLQVVGFCRGPDAVLQHSCVNFHWVKLGERREQTLWIENQSDCQAHFQFDIDCQESVFSIRPAFGTLAGKTRMTLHCAYQPTHPIISFRRVACLIHHQDPLFLDLIGTCHSDSIKPAILTPQHLTWYRTHLARGLTLYPPDILAAMLKEKKLERDEDGALILPIESLPMQELEDLPDQKYPNIPPMTEYFFDGTRDLAIFPPAVCLEPIDVDFGACPGPEAPNPVPLCLRNYTKGKITVVWTGRSDCPFWVTPVTSDVPPLKSIALRLYFQPSSPNCLYAVELEAFAVYKVLQCYSNIEEDCTVVPSWCLKVRARGHSYSPALEHHIPHYSLDSPQTFPAVSPGKPSYRSLFLVNKGSMLMTFSLAPNSSSDITLRPSSGLIGPGAHQVFLISTYPKGTSWRQHIFYLNFNFYPQYLKEVSMQSREEPLDLKLDTHKSIYFKPTWVGCSSTSNFTFHNPSRLPLQFEWRVSQEHQKVLAVQPSKGTIHPNENLTLTWIFSPLEEIKYLFRVGIWVWEARQSQKTKPQATVHYRIRLVGMGVTGCLSAKPVELDFGNVLVNSQEVKPLVLLNDGNCTLYYRLVLEQHRPKGLHSDPCALEFDHSEGTMPPHSQDTIYLTARPKVRSQYSWTISYCLLSQRAPPTNSMDGKKKALCHVSLAAAYPLLSVLDICSMGSTEGITRKHLWHLFSLDTLNSYLARDPTAKELTYKVPTRHSMSRTPPIFTPLKLDFNFGAAPHNALPSVVLLVLKNCGLVPLDWAFLFPSDQQLDLDLWVEQEDLNSNELHQMRAEDNSLFSINPKTGSLNPGQEQMVEFTYRHLFVGTDRLSVLFKVSHGREILLQFIGVTVKLEQKYVHFTSTIHQFIPVPIGDTLPPRQIYELYNGGSVPVTYEVQVSVLSKVQEKNFDHPIFCCLNPKGDIQPGTTARILWIFSPIEAKTYTVEVPIHIIGWNSAVVCFQGVGYDPCVMGDTAPFHSISSWDSSSISSRLMVPGQNVFLSQSHISLGNIPVQSKCSRLFFLNNISKNETIVFTWKPRSLDFGEVTVSPMEGEVGPEEGAPILVTLKASVHASFYSIDLICKVYQRELMRQYHKELQEWNEEKARQEVEFTITDRKVKRRAYCAAHEPPKKYKTLPPITNQPPLNRPATWNLKLAKKETSWPCPQPPVPGLLCLGLTARAHATDYYLANFFSEFPCHFLYRELPKKKSSKEESKSSEELPDKKGPVSRQKQQLLVDCLTSIIRGLLEDKNFHNAVDQNLVEQVPYFCQFWNEQSARFLAQKSSLYLVPILSLPPSYEGRKSKEQEEDLFGKMPGGQEDDEEEEEDEEEAEEEEEEIEEEMSKDEEDIDKDAKMTWSGIKVTETSQHSLQWQWQQDLKTIIKEETESDEKEAIGRLPAFANLQEAILENMIQNILVEASRGEVVLTSRPRIIALPPVSMHRTDNLLQMSQGDVLCSGMQHPDCLLVSASSPSNMTT.

Residues 112 to 132 (FFTIIPQPIFLSPGITLTLPI) form a helical membrane-spanning segment. The region spanning 805 to 914 (DLKLDTHKSI…VHYRIRLVGM (110 aa)) is the MSP domain. Positions 1457–1483 (QRELMRQYHKELQEWNEEKARQEVEFT) form a coiled coil. Residues 1668–1721 (YEGRKSKEQEEDLFGKMPGGQEDDEEEEEDEEEAEEEEEEIEEEMSKDEEDIDK) form a disordered region. Residues 1688-1720 (QEDDEEEEEDEEEAEEEEEEIEEEMSKDEEDID) show a composition bias toward acidic residues.

Belongs to the CFAP65 family. In terms of assembly, interacts with CFAP47. As to expression, predominantly expressed in testis. Highly expressed in round and elongating spermatids. Expressed also in certain ciliated organs, such as the brain, lung and kidney.

Its subcellular location is the cell projection. It localises to the cilium. It is found in the flagellum membrane. The protein localises to the cytoplasmic vesicle. The protein resides in the secretory vesicle. Its subcellular location is the acrosome membrane. It localises to the cytoplasm. Functionally, plays a role in flagellar formation and sperm motility. In Mus musculus (Mouse), this protein is Cilia- and flagella-associated protein 65.